The chain runs to 551 residues: ATPase expression protein 2, mitochondrial (551 aa).

The tract at residues 530–551 (AQKAQKRFDDEEEDSMLLGRLW) is disordered.

This sequence belongs to the AEP2 family. In terms of assembly, binds to the 5'UTR of the OLI1 mRNA.

The protein resides in the mitochondrion. Required for translation of the mitochondrial OLI1 transcript coding for the mitochondrial ATP synthase subunit 9. This chain is ATPase expression protein 2, mitochondrial (AEP2), found in Lachancea thermotolerans (strain ATCC 56472 / CBS 6340 / NRRL Y-8284) (Yeast).